We begin with the raw amino-acid sequence, 297 residues long: Bifunctional protein FolD 2 (297 aa).

NADP(+)-binding positions include 173–175, serine 198, and isoleucine 239; that span reads GKS.

Belongs to the tetrahydrofolate dehydrogenase/cyclohydrolase family. As to quaternary structure, homodimer.

The enzyme catalyses (6R)-5,10-methylene-5,6,7,8-tetrahydrofolate + NADP(+) = (6R)-5,10-methenyltetrahydrofolate + NADPH. The catalysed reaction is (6R)-5,10-methenyltetrahydrofolate + H2O = (6R)-10-formyltetrahydrofolate + H(+). It participates in one-carbon metabolism; tetrahydrofolate interconversion. Catalyzes the oxidation of 5,10-methylenetetrahydrofolate to 5,10-methenyltetrahydrofolate and then the hydrolysis of 5,10-methenyltetrahydrofolate to 10-formyltetrahydrofolate. The sequence is that of Bifunctional protein FolD 2 from Sinorhizobium medicae (strain WSM419) (Ensifer medicae).